A 496-amino-acid chain; its full sequence is uncharacterized protein (496 aa).

Residues 118 to 129 show a composition bias toward basic and acidic residues; the sequence is LDRPFIKPRREN. The interval 118–187 is disordered; sequence LDRPFIKPRR…NPHQSNRNTS (70 aa). The segment covering 151 to 187 has biased composition (polar residues); it reads TSDSQYASPFENHSITNLPIGQKQPFNNPHQSNRNTS.

This is an uncharacterized protein from Acanthamoeba polyphaga mimivirus (APMV).